A 426-amino-acid chain; its full sequence is D-tagatose-1,6-bisphosphate aldolase subunit KbaZ (426 aa).

It belongs to the GatZ/KbaZ family. KbaZ subfamily. In terms of assembly, forms a complex with KbaY.

It participates in carbohydrate metabolism; D-tagatose 6-phosphate degradation; D-glyceraldehyde 3-phosphate and glycerone phosphate from D-tagatose 6-phosphate: step 2/2. In terms of biological role, component of the tagatose-1,6-bisphosphate aldolase KbaYZ that is required for full activity and stability of the Y subunit. Could have a chaperone-like function for the proper and stable folding of KbaY. When expressed alone, KbaZ does not show any aldolase activity. In Escherichia coli O6:H1 (strain CFT073 / ATCC 700928 / UPEC), this protein is D-tagatose-1,6-bisphosphate aldolase subunit KbaZ.